We begin with the raw amino-acid sequence, 290 residues long: 3-hydroxyacyl-thioester dehydratase Y (290 aa).

The interval 147-169 (FGGARGERPAAPEFPDRHPDARI) is disordered. A compositionally biased stretch (basic and acidic residues) spans 151–169 (RGERPAAPEFPDRHPDARI). In terms of domain architecture, MaoC-like spans 161-271 (PDRHPDARID…AVFRTEVAGS (111 aa)).

It belongs to the enoyl-CoA hydratase/isomerase family.

It carries out the reaction a (3R)-3-hydroxyacyl-CoA = a (2E)-enoyl-CoA + H2O. The enzyme catalyses (3R)-hydroxyhexanoyl-CoA = (2E)-hexenoyl-CoA + H2O. It catalyses the reaction (2E)-octenoyl-CoA + H2O = (3R)-hydroxyoctanoyl-CoA. The catalysed reaction is (3R)-3-hydroxydecanoyl-CoA = (2E)-decenoyl-CoA + H2O. It carries out the reaction (3R)-3-hydroxydodecanoyl-CoA = (2E)-dodecenoyl-CoA + H2O. The enzyme catalyses (3R)-hydroxyhexadecanoyl-CoA = (2E)-hexadecenoyl-CoA + H2O. In terms of biological role, shows trans-enoyl-CoA hydratase/3-hydroxyacyl-CoA dehydratase activity. In vitro, can hydrate various enoyl-CoA such as (2E)-hexenoyl-CoA, (2E)-octenoyl-CoA, (2E)-decenoyl-CoA, (2E)-dodecenoyl-CoA and (2E)-hexadecenoyl-CoA. May contribute to the persistence of the tuberculosis infection by inducing COX-2 expression in macrophages through MAPK-NF-kappaB signaling pathway. This chain is 3-hydroxyacyl-thioester dehydratase Y, found in Mycobacterium tuberculosis (strain ATCC 25618 / H37Rv).